A 77-amino-acid polypeptide reads, in one-letter code: Translation initiation factor IF-1, chloroplastic (77 aa).

In terms of domain architecture, S1-like spans 1–71 (MKEQKWIHEG…TRGRIIYRLR (71 aa)).

The protein belongs to the IF-1 family. Component of the 30S ribosomal translation pre-initiation complex which assembles on the 30S ribosome in the order IF-2 and IF-3, IF-1 and N-formylmethionyl-tRNA(fMet); mRNA recruitment can occur at any time during PIC assembly.

Its subcellular location is the plastid. It is found in the chloroplast. Its function is as follows. One of the essential components for the initiation of protein synthesis. Stabilizes the binding of IF-2 and IF-3 on the 30S subunit to which N-formylmethionyl-tRNA(fMet) subsequently binds. Helps modulate mRNA selection, yielding the 30S pre-initiation complex (PIC). Upon addition of the 50S ribosomal subunit IF-1, IF-2 and IF-3 are released leaving the mature 70S translation initiation complex. The chain is Translation initiation factor IF-1, chloroplastic from Nandina domestica (Heavenly bamboo).